Reading from the N-terminus, the 492-residue chain is NADH-quinone oxidoreductase subunit N (492 aa).

A run of 14 helical transmembrane segments spans residues 5–25 (PMTA…AWLI), 37–57 (TYFI…IDAL), 72–92 (VVDP…AVSI), 104–124 (LYEG…LVMI), 129–149 (FLTL…AIAL), 164–184 (YVLG…LYGA), 205–225 (VVLL…MGAV), 239–259 (PTAM…AWGL), 276–295 (MLVI…GIVQ), 302–322 (LAYS…AGVV), 337–357 (MFYS…VMLL), 380–400 (FAFV…AVGF), 414–434 (GLTW…FYYL), and 466–486 (VAVL…LNAI).

This sequence belongs to the complex I subunit 2 family. In terms of assembly, NDH-1 is composed of 14 different subunits. Subunits NuoA, H, J, K, L, M, N constitute the membrane sector of the complex.

It is found in the cell inner membrane. The enzyme catalyses a quinone + NADH + 5 H(+)(in) = a quinol + NAD(+) + 4 H(+)(out). Functionally, NDH-1 shuttles electrons from NADH, via FMN and iron-sulfur (Fe-S) centers, to quinones in the respiratory chain. The immediate electron acceptor for the enzyme in this species is believed to be ubiquinone. Couples the redox reaction to proton translocation (for every two electrons transferred, four hydrogen ions are translocated across the cytoplasmic membrane), and thus conserves the redox energy in a proton gradient. The chain is NADH-quinone oxidoreductase subunit N from Paraburkholderia phymatum (strain DSM 17167 / CIP 108236 / LMG 21445 / STM815) (Burkholderia phymatum).